The sequence spans 1710 residues: Latrophilin Cirl (1710 aa).

Residues 1-767 lie on the Extracellular side of the membrane; sequence MLPTILSISY…LFTMFDGNMR (767 aa). Positions 25–114 constitute an SUEL-type lectin domain; the sequence is ACEGKKLTIE…KYLEAHYQCI (90 aa). Asparagine 142 carries an N-linked (GlcNAc...) asparagine glycan. Positions 183-304 are disordered; that stretch reads QHTAVTHSTP…SGSVVPGNGS (122 aa). Polar residues-rich tracts occupy residues 185–198 and 256–265; these read TAVTHSTPSSSTTA and NATSPSNTRI. The N-linked (GlcNAc...) asparagine glycan is linked to asparagine 256. 2 stretches are compositionally biased toward low complexity: residues 275–285 and 295–304; these read DDGTLLTTKSS and SGSVVPGNGS. N-linked (GlcNAc...) asparagine glycans are attached at residues asparagine 302 and asparagine 341. Positions 376 to 400 are disordered; sequence YDEYDDDPSSTTPATSSADCLHNSS. The segment covering 384-394 has biased composition (low complexity); it reads SSTTPATSSAD. Residues asparagine 398, asparagine 655, asparagine 703, and asparagine 730 are each glycosylated (N-linked (GlcNAc...) asparagine). In terms of domain architecture, GAIN-B spans 561–754; that stretch reads RSVVQKVKNI…AILMDVVDEH (194 aa). 2 disulfides stabilise this stretch: cysteine 709–cysteine 736 and cysteine 724–cysteine 738. Residues 709–754 are GPS; it reads CVFWNYIDHAWSANGCSLESTNRTHSVCSCNHLTNFAILMDVVDEH. The helical transmembrane segment at 768–788 threads the bilayer; that stretch reads IFIYISIGICVVFIVIALLTL. The Cytoplasmic segment spans residues 789 to 801; sequence KLFNGVFVKSART. Residues 802–822 form a helical membrane-spanning segment; that stretch reads SIYTSIYLCLLAIELLFLLGI. Over 823–828 the chain is Extracellular; it reads EQTETS. The chain crosses the membrane as a helical span at residues 829-849; the sequence is IFCGFITIFLHCAILSGTAWF. Topologically, residues 850–875 are cytoplasmic; sequence CYEAFHSYSTLTSDELLLEVDQTPKV. A helical transmembrane segment spans residues 876–896; it reads NCYYLLSYGLSLSVVAISLVI. The Extracellular segment spans residues 897 to 920; it reads DPSTYTQNDYCVLMEANALFYATF. The chain crosses the membrane as a helical span at residues 921-941; it reads VMPVLVFFVAAIGYTFLSWII. The Cytoplasmic segment spans residues 942–968; sequence MCRKSRTGLKTKEHTRLASVRFDIRCS. The helical transmembrane segment at 969–989 threads the bilayer; sequence FVFLLLLSAVWCSAYFYLRGA. Residues 990 to 999 lie on the Extracellular side of the membrane; sequence KMDDDTADVY. A helical membrane pass occupies residues 1000–1020; sequence GYCFICFNTLLGLYIFVFHCI. Residues 1021–1710 are Cytoplasmic-facing; sequence QNEKIRREYR…VRCYLEPLAK (690 aa). Phosphoserine is present on residues serine 1156, serine 1253, serine 1260, serine 1329, and serine 1330. Residues 1234–1259 form a disordered region; sequence KPNSGQHGKKKRGAGGVPASPSGSLH. 2 disordered regions span residues 1452 to 1540 and 1568 to 1690; these read GGGS…SDER and DYGA…QQRH. Over residues 1458–1483 the composition is skewed to low complexity; sequence GGSVSSRSQQQQLKKQQQQQSLAQQR. Acidic residues-rich tracts occupy residues 1491–1505 and 1515–1528; these read DDDDDEDEEEDEEAT and CDEDEEEDESDLED. The segment covering 1638–1650 has biased composition (polar residues); that stretch reads QTPAQKRQQLQKL. The span at 1651-1672 shows a compositional bias: low complexity; that stretch reads SPQSTTSSSSHTSHSNPNPHPH. The segment covering 1673–1689 has biased composition (basic residues); sequence QLTHPHPHQHPPHHQQR.

This sequence belongs to the G-protein coupled receptor 2 family. LN-TM7 subfamily. In terms of assembly, forms a heterodimer, consisting of a large extracellular region non-covalently linked to a seven-transmembrane moiety. Proteolytically cleaved into 2 subunits, an extracellular subunit and a seven-transmembrane subunit.

The protein localises to the cell membrane. This is Latrophilin Cirl from Drosophila erecta (Fruit fly).